Here is a 148-residue protein sequence, read N- to C-terminus: Succinate dehydrogenase assembly factor 3, mitochondrial (148 aa).

A mitochondrion-targeting transit peptide spans 1 to 12; sequence MYALRPTLRRSA. The disordered stretch occupies residues 129-148; that stretch reads RGTEGDLEDGDGGESGQKSQ.

This sequence belongs to the complex I LYR family. SDHAF3 subfamily. In terms of assembly, interacts with the iron-sulfur protein subunit within the SDH catalytic dimer.

Its subcellular location is the mitochondrion matrix. Functionally, plays an essential role in the assembly of succinate dehydrogenase (SDH), an enzyme complex (also referred to as respiratory complex II) that is a component of both the tricarboxylic acid (TCA) cycle and the mitochondrial electron transport chain, and which couples the oxidation of succinate to fumarate with the reduction of ubiquinone (coenzyme Q) to ubiquinol. Promotes maturation of the iron-sulfur protein subunit of the SDH catalytic dimer, protecting it from the deleterious effects of oxidants. May act together with SDHAF1. The chain is Succinate dehydrogenase assembly factor 3, mitochondrial from Neurospora crassa (strain ATCC 24698 / 74-OR23-1A / CBS 708.71 / DSM 1257 / FGSC 987).